The chain runs to 563 residues: Tripeptidyl-peptidase 1 (563 aa).

An N-terminal signal peptide occupies residues Met-1 to Cys-19. The propeptide at Ser-20 to Gly-195 is removed in mature form. A disulfide bridge connects residues Cys-111 and Cys-122. The Peptidase S53 domain occupies Gly-199–Pro-563. 2 N-linked (GlcNAc...) asparagine glycosylation sites follow: Asn-210 and Asn-222. Active-site charge relay system residues include Glu-272 and Asp-276. 3 N-linked (GlcNAc...) asparagine glycosylation sites follow: Asn-286, Asn-313, and Asn-443. Intrachain disulfides connect Cys-365-Cys-526 and Cys-522-Cys-537. The active-site Charge relay system is the Ser-475. Ca(2+) is bound by residues Asp-517 and Val-518. 3 residues coordinate Ca(2+): Gly-539, Gly-541, and Asp-543.

As to quaternary structure, monomer. Interacts with CLN5. Interacts with CLN3. Requires Ca(2+) as cofactor. In terms of processing, activated by autocatalytic proteolytical processing upon acidification. N-glycosylation is required for processing and activity.

It is found in the lysosome. The protein resides in the melanosome. The enzyme catalyses Release of an N-terminal tripeptide from a polypeptide, but also has endopeptidase activity.. Its function is as follows. Lysosomal serine protease with tripeptidyl-peptidase I activity. May act as a non-specific lysosomal peptidase which generates tripeptides from the breakdown products produced by lysosomal proteinases. Requires substrates with an unsubstituted N-terminus. In Bos taurus (Bovine), this protein is Tripeptidyl-peptidase 1 (TPP1).